The following is a 179-amino-acid chain: Inner membrane-spanning protein YciB (179 aa).

The next 5 membrane-spanning stretches (helical) occupy residues 22-42 (IYAATTALIVATAIVLIYSWV), 50-70 (MALITFVLVAVFGGLTLFFHN), 76-96 (WKVTVIYALFAGALLFSQWVM), 121-141 (LAWAVFFILCGLANIYIAFWL), and 149-169 (FKVFGLTALTLVFTLLSGIYI).

The protein belongs to the YciB family.

It is found in the cell inner membrane. In terms of biological role, plays a role in cell envelope biogenesis, maintenance of cell envelope integrity and membrane homeostasis. This Klebsiella pneumoniae (strain 342) protein is Inner membrane-spanning protein YciB.